Consider the following 381-residue polypeptide: Queuine tRNA-ribosyltransferase (381 aa).

Catalysis depends on aspartate 89, which acts as the Proton acceptor. Substrate is bound by residues 89–93 (DSGGF), aspartate 143, glutamine 187, and glycine 214. An RNA binding region spans residues 245-251 (GVGKPED). Residue aspartate 264 is the Nucleophile of the active site. An RNA binding; important for wobble base 34 recognition region spans residues 269–273 (TRNAR). Positions 302, 304, 307, and 333 each coordinate Zn(2+).

The protein belongs to the queuine tRNA-ribosyltransferase family. As to quaternary structure, homodimer. Within each dimer, one monomer is responsible for RNA recognition and catalysis, while the other monomer binds to the replacement base PreQ1. The cofactor is Zn(2+).

The catalysed reaction is 7-aminomethyl-7-carbaguanine + guanosine(34) in tRNA = 7-aminomethyl-7-carbaguanosine(34) in tRNA + guanine. The protein operates within tRNA modification; tRNA-queuosine biosynthesis. Functionally, catalyzes the base-exchange of a guanine (G) residue with the queuine precursor 7-aminomethyl-7-deazaguanine (PreQ1) at position 34 (anticodon wobble position) in tRNAs with GU(N) anticodons (tRNA-Asp, -Asn, -His and -Tyr). Catalysis occurs through a double-displacement mechanism. The nucleophile active site attacks the C1' of nucleotide 34 to detach the guanine base from the RNA, forming a covalent enzyme-RNA intermediate. The proton acceptor active site deprotonates the incoming PreQ1, allowing a nucleophilic attack on the C1' of the ribose to form the product. After dissociation, two additional enzymatic reactions on the tRNA convert PreQ1 to queuine (Q), resulting in the hypermodified nucleoside queuosine (7-(((4,5-cis-dihydroxy-2-cyclopenten-1-yl)amino)methyl)-7-deazaguanosine). The polypeptide is Queuine tRNA-ribosyltransferase (Pectobacterium carotovorum subsp. carotovorum (strain PC1)).